Here is a 597-residue protein sequence, read N- to C-terminus: Cytosolic Fe-S cluster assembly factor nar1 (597 aa).

Cysteine 20, cysteine 61, cysteine 64, cysteine 67, cysteine 209, and cysteine 264 together coordinate [4Fe-4S] cluster. The segment at 419–447 (PARASRLPGARQSATSAGGSRRQLASRNA) is disordered. The span at 430 to 447 (QSATSAGGSRRQLASRNA) shows a compositional bias: polar residues. Positions 464 and 468 each coordinate [4Fe-4S] cluster. Residues 482–504 (EAASNMSVESQTEPPEAALKPTP) form a disordered region. Polar residues predominate over residues 485–494 (SNMSVESQTE).

This sequence belongs to the NARF family.

Component of the cytosolic Fe/S protein assembly machinery. Required for maturation of extramitochondrial Fe/S proteins. May play a role in the transfer of pre-assembled Fe/S clusters to target apoproteins. The sequence is that of Cytosolic Fe-S cluster assembly factor nar1 (nar1) from Aspergillus clavatus (strain ATCC 1007 / CBS 513.65 / DSM 816 / NCTC 3887 / NRRL 1 / QM 1276 / 107).